The primary structure comprises 356 residues: Phosphoribosylformylglycinamidine cyclo-ligase (356 aa).

The protein belongs to the AIR synthase family.

The protein localises to the cytoplasm. It carries out the reaction 2-formamido-N(1)-(5-O-phospho-beta-D-ribosyl)acetamidine + ATP = 5-amino-1-(5-phospho-beta-D-ribosyl)imidazole + ADP + phosphate + H(+). The protein operates within purine metabolism; IMP biosynthesis via de novo pathway; 5-amino-1-(5-phospho-D-ribosyl)imidazole from N(2)-formyl-N(1)-(5-phospho-D-ribosyl)glycinamide: step 2/2. The chain is Phosphoribosylformylglycinamidine cyclo-ligase from Acinetobacter baylyi (strain ATCC 33305 / BD413 / ADP1).